A 518-amino-acid chain; its full sequence is Nuclear receptor ROR-gamma (518 aa).

A modulating region spans residues Met1–Pro30. 2 consecutive NR C4-type zinc fingers follow at residues Cys31–Cys51 and Cys67–Cys91. Residues Cys31–Met96 constitute a DNA-binding region (nuclear receptor). 2 disordered regions span residues Arg105–Gly183 and His238–Ser258. Residues Lys109–Val118 show a composition bias toward basic and acidic residues. A compositionally biased stretch (low complexity) spans Gln119–Gln130. In terms of domain architecture, NR LBD spans Glu269–Thr508. The AF-2 motif lies at Leu501 to Phe506.

Belongs to the nuclear hormone receptor family. NR1 subfamily. In terms of assembly, interacts (via AF-2 motif) with the coactivators NCOA1, NCOA2 and PPARGC1A (via LXXLL motif). Interacts with the corepressor NCOR1. Interacts with CRY1. Interacts (via AF-2 motif) with PROX1. Interacts with FOXP3. Interacts with NR0B2.

The protein resides in the nucleus. Functionally, nuclear receptor that binds DNA as a monomer to ROR response elements (RORE) containing a single core motif half-site 5'-AGGTCA-3' preceded by a short A-T-rich sequence. Key regulator of cellular differentiation, immunity, peripheral circadian rhythm as well as lipid, steroid, xenobiotics and glucose metabolism. Considered to have intrinsic transcriptional activity, have some natural ligands like oxysterols that act as agonists (25-hydroxycholesterol) or inverse agonists (7-oxygenated sterols), enhancing or repressing the transcriptional activity, respectively. Recruits distinct combinations of cofactors to target gene regulatory regions to modulate their transcriptional expression, depending on the tissue, time and promoter contexts. Regulates the circadian expression of clock genes such as CRY1, BMAL1 and NR1D1 in peripheral tissues and in a tissue-selective manner. Competes with NR1D1 for binding to their shared DNA response element on some clock genes such as BMAL1, CRY1 and NR1D1 itself, resulting in NR1D1-mediated repression or RORC-mediated activation of the expression, leading to the circadian pattern of clock genes expression. Therefore influences the period length and stability of the clock. Involved in the regulation of the rhythmic expression of genes involved in glucose and lipid metabolism, including PLIN2 and AVPR1A. Negative regulator of adipocyte differentiation through the regulation of early phase genes expression, such as MMP3. Controls adipogenesis as well as adipocyte size and modulates insulin sensitivity in obesity. In liver, has specific and redundant functions with RORA as positive or negative modulator of expression of genes encoding phase I and Phase II proteins involved in the metabolism of lipids, steroids and xenobiotics, such as SULT1E1. Also plays a role in the regulation of hepatocyte glucose metabolism through the regulation of G6PC1 and PCK1. Essential for thymopoiesis and the development of several secondary lymphoid tissues, including lymph nodes and Peyer's patches. Required for the generation of LTi (lymphoid tissue inducer) cells. Regulates thymocyte survival through DNA-binding on ROREs of target gene promoter regions and recruitment of coactivaros via the AF-2. Also plays a key role, downstream of IL6 and TGFB and synergistically with RORA, for lineage specification of uncommitted CD4(+) T-helper (T(H)) cells into T(H)17 cells, antagonizing the T(H)1 program. Probably regulates IL17 and IL17F expression on T(H) by binding to the essential enhancer conserved non-coding sequence 2 (CNS2) in the IL17-IL17F locus. May also play a role in the pre-TCR activation cascade leading to the maturation of alpha/beta T-cells and may participate in the regulation of DNA accessibility in the TCR-J(alpha) locus. Regulates the rhythmic expression of PROX1 and promotes its nuclear localization. Plays an indispensable role in the induction of IFN-gamma dependent anti-mycobacterial systemic immunity. In Pongo abelii (Sumatran orangutan), this protein is Nuclear receptor ROR-gamma (RORC).